A 479-amino-acid chain; its full sequence is GTPase Obg (479 aa).

In terms of domain architecture, Obg spans proline 2–valine 159. The 181-residue stretch at alanine 160–serine 340 folds into the OBG-type G domain. Residues glycine 166–serine 173, phenylalanine 191–valine 195, aspartate 212–glycine 215, asparagine 292–aspartate 295, and serine 321–alanine 323 contribute to the GTP site. Residues serine 173 and threonine 193 each coordinate Mg(2+). The OCT domain maps to proline 358–proline 436. Positions tryptophan 434–glycine 479 are disordered. The span at threonine 451–alanine 468 shows a compositional bias: basic and acidic residues. Positions alanine 469–glycine 479 are enriched in basic residues.

It belongs to the TRAFAC class OBG-HflX-like GTPase superfamily. OBG GTPase family. As to quaternary structure, monomer. Requires Mg(2+) as cofactor.

It localises to the cytoplasm. In terms of biological role, an essential GTPase which binds GTP, GDP and possibly (p)ppGpp with moderate affinity, with high nucleotide exchange rates and a fairly low GTP hydrolysis rate. Plays a role in control of the cell cycle, stress response, ribosome biogenesis and in those bacteria that undergo differentiation, in morphogenesis control. The chain is GTPase Obg from Mycobacterium tuberculosis (strain ATCC 25177 / H37Ra).